Reading from the N-terminus, the 773-residue chain is 3-isopropylmalate dehydratase (773 aa).

[4Fe-4S] cluster-binding residues include Cys-355, Cys-415, and Cys-418.

This sequence belongs to the aconitase/IPM isomerase family. In terms of assembly, monomer. [4Fe-4S] cluster serves as cofactor.

The enzyme catalyses (2R,3S)-3-isopropylmalate = (2S)-2-isopropylmalate. It functions in the pathway amino-acid biosynthesis; L-leucine biosynthesis; L-leucine from 3-methyl-2-oxobutanoate: step 2/4. Functionally, catalyzes the isomerization between 2-isopropylmalate and 3-isopropylmalate, via the formation of 2-isopropylmaleate. This chain is 3-isopropylmalate dehydratase (LEU1), found in Mycosarcoma maydis (Corn smut fungus).